The following is a 325-amino-acid chain: Siroheme decarboxylase NirDL subunit (325 aa).

The protein belongs to the Ahb/Nir family. Forms a complex composed of NirDL, NirG and NirH. All proteins are required for the total conversion of siroheme to didecarboxysiroheme.

It carries out the reaction siroheme + 2 H(+) = 12,18-didecarboxysiroheme + 2 CO2. Its pathway is porphyrin-containing compound metabolism. Its function is as follows. Involved in heme d1 biosynthesis. Catalyzes the decarboxylation of siroheme into didecarboxysiroheme. The sequence is that of Siroheme decarboxylase NirDL subunit from Paracoccus denitrificans (strain Pd 1222).